A 146-amino-acid polypeptide reads, in one-letter code: Angiogenin (146 aa).

An N-terminal signal peptide occupies residues 1-24; sequence MVMGLGLFLLVFMLGLGLTPPTLA. Glutamine 25 is modified (pyrrolidone carboxylic acid). Histidine 37 (proton acceptor) is an active-site residue. Position 45 (arginine 45) interacts with tRNA. Cystine bridges form between cysteine 50-cysteine 105, cysteine 63-cysteine 116, and cysteine 81-cysteine 131. A Nucleolar localization signal motif is present at residues 55–59; it reads RRRHL. Residues cysteine 105 and isoleucine 127 each coordinate tRNA. The active-site Proton donor is histidine 138.

This sequence belongs to the pancreatic ribonuclease family. Homodimer. Interacts with RNH1; inhibiting ANG ribonuclease activity. Interacts with PCNA.

The protein resides in the secreted. Its subcellular location is the nucleus. The protein localises to the nucleolus. It localises to the cytoplasm. It is found in the stress granule. Has weak tRNA ribonuclease activity by itself due to partial autoinhibition by its C-terminus, which folds into a short alpha-helix that partially occludes the substrate-binding site. In absence of stress, the ribonuclease activity is inhibited by RNH1 in the cytoplasm. In response to stress, dissociates from RNH1 in the cytoplasm and associates with cytoplasmic ribosomes with vacant A-sites: ribosomes directly activate the tRNA ribonuclease activity of ANG by refolding the C-terminal alpha-helix. In response to stress, the angiogenic activity of ANG is inhibited by RNH1 in the nucleus. Its function is as follows. Secreted ribonuclease that can either promote or restrict cell proliferation of target cells, depending on the context. Endocytosed in target cells via its receptor PLXNB2 and translocates to the cytoplasm or nucleus. Under stress conditions, localizes to the cytoplasm and promotes the assembly of stress granules (SGs): specifically cleaves a subset of tRNAs within anticodon loops to produce tRNA-derived stress-induced fragments (tiRNAs), resulting in translation repression and inhibition of cell proliferation. tiRNas also prevent formation of apoptosome, thereby promoting cell survival. Preferentially cleaves RNAs between a pyrimidine and an adenosine residue, suggesting that it cleaves the anticodon loop of tRNA(Ala) (32-UUAGCAU-38) after positions 33 and 36. Cleaves a subset of tRNAs, including tRNA(Ala), tRNA(Glu), tRNA(Gly), tRNA(Lys), tRNA(Val), tRNA(His), tRNA(Asp) and tRNA(Sec). Under growth conditions and in differentiated cells, translocates to the nucleus and stimulates ribosomal RNA (rRNA) transcription, including that containing the initiation site sequences of 45S rRNA, thereby promoting cell growth and proliferation. Angiogenin induces vascularization of normal and malignant tissues via its ability to promote rRNA transcription. Involved in hematopoietic stem and progenitor cell (HSPC) growth and survival by promoting rRNA transcription in growth conditions and inhibiting translation in response to stress, respectively. Mediates the crosstalk between myeloid and intestinal epithelial cells to protect the intestinal epithelial barrier integrity: secreted by myeloid cells and promotes intestinal epithelial cells proliferation and survival. Also mediates osteoclast-endothelial cell crosstalk in growing bone: produced by osteoclasts and protects the neighboring vascular cells against senescence by promoting rRNA transcription. The chain is Angiogenin (ANG) from Chlorocebus aethiops (Green monkey).